We begin with the raw amino-acid sequence, 303 residues long: 5'-3' exonuclease (303 aa).

Residues 179-262 enclose the 5'-3' exonuclease domain; it reads ISPAQWVDVK…LATITTEIEA (84 aa).

5'-3' exonuclease acting preferentially on double-stranded DNA. The sequence is that of 5'-3' exonuclease from Halalkalibacterium halodurans (strain ATCC BAA-125 / DSM 18197 / FERM 7344 / JCM 9153 / C-125) (Bacillus halodurans).